The sequence spans 452 residues: Maltoporin (452 aa).

An N-terminal signal peptide occupies residues methionine 1–alanine 25.

It belongs to the porin LamB (TC 1.B.3) family. Homotrimer formed of three 18-stranded antiparallel beta-barrels, containing three independent channels.

It is found in the cell outer membrane. It catalyses the reaction beta-maltose(in) = beta-maltose(out). In terms of biological role, involved in the transport of maltose and maltodextrins. This is Maltoporin from Salmonella enteritidis PT4 (strain P125109).